Reading from the N-terminus, the 827-residue chain is Zinc phosphodiesterase ELAC protein 2 (827 aa).

A mitochondrion-targeting transit peptide spans 1–16 (MWALRSLLRPLGLRTM). Disordered stretches follow at residues 15–46 (TMSQ…GWGP) and 181–220 (SERR…QCLP). A compositionally biased stretch (basic and acidic residues) spans 181-192 (SERRCGEQEPSR). Phosphoserine occurs at positions 193, 197, 202, 207, 617, and 735. Polar residues predominate over residues 199-210 (NRLSPKQSSSDP). A disordered region spans residues 794–827 (LTQQADSSEDREPHQKRAHSEEPHSPQSKKVRAQ). Thr795 carries the post-translational modification Phosphothreonine. Position 800 is a phosphoserine (Ser800). The segment covering 801–817 (SEDREPHQKRAHSEEPH) has biased composition (basic and acidic residues). Position 818 is a phosphoserine (Ser818).

The protein belongs to the RNase Z family. As to quaternary structure, homodimer. Interacts with PTCD1. Zn(2+) serves as cofactor.

The protein localises to the mitochondrion. The protein resides in the mitochondrion matrix. It is found in the mitochondrion nucleoid. Its subcellular location is the nucleus. It catalyses the reaction Endonucleolytic cleavage of RNA, removing extra 3' nucleotides from tRNA precursor, generating 3' termini of tRNAs. A 3'-hydroxy group is left at the tRNA terminus and a 5'-phosphoryl group is left at the trailer molecule.. Zinc phosphodiesterase, which displays mitochondrial tRNA 3'-processing endonuclease activity. Involved in tRNA maturation, by removing a 3'-trailer from precursor tRNA. Associates with mitochondrial DNA complexes at the nucleoids to initiate RNA processing and ribosome assembly. The sequence is that of Zinc phosphodiesterase ELAC protein 2 (Elac2) from Rattus norvegicus (Rat).